The primary structure comprises 108 residues: uncharacterized protein (108 aa).

A helical transmembrane segment spans residues 7-27 (FIPMLLVANAAPYFFYPIFML).

To N.crassa NCU05373.1.

Its subcellular location is the membrane. This is an uncharacterized protein from Schizosaccharomyces pombe (strain 972 / ATCC 24843) (Fission yeast).